The following is a 95-amino-acid chain: Co-chaperonin GroES (95 aa).

The protein belongs to the GroES chaperonin family. In terms of assembly, heptamer of 7 subunits arranged in a ring. Interacts with the chaperonin GroEL.

It is found in the cytoplasm. In terms of biological role, together with the chaperonin GroEL, plays an essential role in assisting protein folding. The GroEL-GroES system forms a nano-cage that allows encapsulation of the non-native substrate proteins and provides a physical environment optimized to promote and accelerate protein folding. GroES binds to the apical surface of the GroEL ring, thereby capping the opening of the GroEL channel. This chain is Co-chaperonin GroES, found in Neisseria meningitidis serogroup C (strain 053442).